The sequence spans 495 residues: COP9 signalosome complex subunit 2 (495 aa).

The tract at residues 1-26 is disordered; the sequence is MGDEYMDDDEDYGFEYEDDSGSEPDV. The region spanning 254 to 416 is the PCI domain; it reads AHTDFFEAFK…GMIEMPKNKK (163 aa). A disordered region spans residues 426 to 468; it reads PNAGDQGTTKSDSKPGTSSEPSTTTSVTSSILQGPPATSSCHQ. Polar residues predominate over residues 430–441; that stretch reads DQGTTKSDSKPG. The span at 442–455 shows a compositional bias: low complexity; sequence TSSEPSTTTSVTSS.

This sequence belongs to the CSN2 family. Component of the CSN complex, probably composed of csn-1, csn-2, csn-3, csn-4, csn-5, csn-6 and csn-7. Within the complex it probably interacts directly with csn-1, csn-3 and csn-4.

Its subcellular location is the cytoplasm. It is found in the nucleus. In terms of biological role, essential component of the COP9 signalosome complex (CSN), a complex involved in various cellular and developmental processes. The CSN complex is an essential regulator of the ubiquitin (Ubl) conjugation pathway by mediating the deneddylation of the cullin subunits of the SCF-type E3 ligase complexes, leading to decrease the Ubl ligase activity of SCF. The CSN complex plays an essential role in embryogenesis and oogenesis and is required to regulate microtubule stability in the early embryo. Mediates mei-3/katanin targeting for degradation at the meiosis to mitosis transition via deneddylation of cul-3. The chain is COP9 signalosome complex subunit 2 (csn-2) from Caenorhabditis elegans.